Reading from the N-terminus, the 512-residue chain is MATAAACISFASPSPARVVIRRQTRASASASATDRQEVVSPKRRLPLRKVPGDYGPPVVGAIRDRYEYFYGPGGRDGFFAARVRAHRSTVVRLNMPPGPFVARDPRVVALLDAASFPVLFDTSLVDKTDLFTGTFMPSTDLTGGYRVLSYLDPSEPNHAPLKTLLFYLLSHRRQQVIPKFREVYGDLFGLMENDLARVGKADFGVHNDAAAFGFLCQGLLGRDPAKSALGRDGPKLITKWVLFQLSPLLSLGLPTLVEDTLLHSLRLPPALVKKDYDRLADFFRDAAKAVVDEGERLGIAREEAVHNILFALCFNSFGGMKILFPTLVKWLGRAGARVHGRLATEVRGAVRDNGGEVTMKALAEMPLVKSAVYEALRIEPPVAMQYGRAKRDMVVESHDYGYEVREGEMLFGYQPMATKDPRVFARPEEYVPDRFLGEDGARLLRHVVWSNGPETAAPTLHDKQCAGKDFVVLVARLLLVELFLRYDSFDVEVGTSTLGSSVTVTSLKKATF.

The transit peptide at 1 to 25 (MATAAACISFASPSPARVVIRRQTR) directs the protein to the chloroplast. The interval 23-43 (QTRASASASATDRQEVVSPKR) is disordered. The heme b site is built by lysine 127, histidine 158, and lysine 162. Asparagine 315 is a (13S)-hydroperoxy-(9Z,11E,15Z)-octadecatrienoate binding site. Residues lysine 463 and cysteine 465 each contribute to the heme b site.

It belongs to the cytochrome P450 family. The cofactor is heme b. Expressed in coleoptiles, and at lower level in leaves of dark-grown seedlings.

It localises to the plastid. The protein resides in the chloroplast membrane. The catalysed reaction is (13S)-hydroperoxy-(9Z,11E,15Z)-octadecatrienoate = (9Z,13S,15Z)-12,13-epoxyoctadeca-9,11,15-trienoate + H2O. The protein operates within lipid metabolism; oxylipin biosynthesis. Its function is as follows. Involved in the biosynthesis of jasmonic acid, a growth regulator that is implicated also as a signaling molecule in plant defense. Converts 13-hydroperoxylinolenic acid to 12,13-epoxylinolenic acid. The sequence is that of Allene oxide synthase 1, chloroplastic (CYP74A1) from Oryza sativa subsp. japonica (Rice).